The chain runs to 425 residues: Histone-binding protein RBBP4 (425 aa).

Position 2 is an N-acetylalanine (Ala2). WD repeat units lie at residues 32–125 (YDLV…NHEG), 126–175 (EVNR…RLRG), 176–223 (HQKE…KTIF), 225–270 (GHTA…HSVD), 271–314 (AHTA…HSFE), 315–371 (SHKD…FIHG), and 372–404 (GHTA…VWQM). The interval 361–406 (DGPPELLFIHGGHTAKISDFSWNPNEPWVICSVSEDNIMQVWQMAE) is interaction with HAT1.

This sequence belongs to the WD repeat RBAP46/RBAP48/MSI1 family. Binds directly to histone H4, probably via helix 1 of the histone fold, a region that is not accessible when histone H4 is in chromatin. Interacts with CHAF1A, HDAC1, HDAC2, HDAC3 and HIRA. May also interact with HAT1.

The protein localises to the nucleus. Its subcellular location is the chromosome. The protein resides in the telomere. In terms of biological role, core histone-binding subunit that may target chromatin assembly factors, chromatin remodeling factors and histone deacetylases to their histone substrates in a manner that is regulated by nucleosomal DNA. Component of several complexes which regulate chromatin metabolism. The protein is Histone-binding protein RBBP4 (RBBP4) of Gallus gallus (Chicken).